An 86-amino-acid chain; its full sequence is uncharacterized protein (86 aa).

This is an uncharacterized protein from Haemophilus phage HP1 (strain HP1c1) (Bacteriophage HP1).